The chain runs to 1097 residues: DNA-directed RNA polymerase subunit beta (1097 aa).

Residues 1070-1097 (LMQDVNPRRNTPSRPTYESLGTSEYEED) form a disordered region. The span at 1077–1091 (RRNTPSRPTYESLGT) shows a compositional bias: polar residues.

The protein belongs to the RNA polymerase beta chain family. In cyanobacteria the RNAP catalytic core is composed of 2 alpha, 1 beta, 1 beta', 1 gamma and 1 omega subunit. When a sigma factor is associated with the core the holoenzyme is formed, which can initiate transcription.

The catalysed reaction is RNA(n) + a ribonucleoside 5'-triphosphate = RNA(n+1) + diphosphate. Functionally, DNA-dependent RNA polymerase catalyzes the transcription of DNA into RNA using the four ribonucleoside triphosphates as substrates. The polypeptide is DNA-directed RNA polymerase subunit beta (Prochlorococcus marinus (strain MIT 9515)).